Consider the following 238-residue polypeptide: Uridylate kinase (238 aa).

12–15 (KVSG) contributes to the ATP binding site. Gly-54 is a binding site for UMP. 2 residues coordinate ATP: Gly-55 and Arg-59. Residues Asp-74 and 135 to 142 (TGNPYFTT) each bind UMP. ATP is bound by residues Thr-162, Asn-163, Tyr-168, and Asp-171.

Belongs to the UMP kinase family. As to quaternary structure, homohexamer.

It localises to the cytoplasm. The catalysed reaction is UMP + ATP = UDP + ADP. Its pathway is pyrimidine metabolism; CTP biosynthesis via de novo pathway; UDP from UMP (UMPK route): step 1/1. Inhibited by UTP. Catalyzes the reversible phosphorylation of UMP to UDP. In Azorhizobium caulinodans (strain ATCC 43989 / DSM 5975 / JCM 20966 / LMG 6465 / NBRC 14845 / NCIMB 13405 / ORS 571), this protein is Uridylate kinase.